Here is a 670-residue protein sequence, read N- to C-terminus: Auxin response factor 16 (670 aa).

The segment at residues 120-222 (FAKTLTQSDA…DLCVGIRRAK (103 aa)) is a DNA-binding region (TF-B3). Polar residues predominate over residues 545 to 557 (KTQISSGGSNQNG). The tract at residues 545 to 579 (KTQISSGGSNQNGVAGREFSSSDEGSPCSKKVHDA) is disordered. Positions 584-664 (TGHCKVFMES…RRLTILTEQG (81 aa)) constitute a PB1 domain.

Belongs to the ARF family. As to quaternary structure, homodimers and heterodimers.

It is found in the nucleus. Auxin response factors (ARFs) are transcriptional factors that bind specifically to the DNA sequence 5'-TGTCTC-3' found in the auxin-responsive promoter elements (AuxREs). Could act as transcriptional activator or repressor. Formation of heterodimers with Aux/IAA proteins may alter their ability to modulate early auxin response genes expression. This is Auxin response factor 16 (ARF16) from Arabidopsis thaliana (Mouse-ear cress).